The following is a 333-amino-acid chain: MASAVFRLLQQGPRRLLAPAVPTLAPPVRGVKKGFRAAFRFQKELERWRLLRCPPPPVRRSEKPNWDYHAEVQAFGSRLQETFSLDLLKTAFINSCYIKSEEAKRQSLGIEKEAALLNLKDNQELFEQGLSFSHRCLTQFLEDEFPDLPAEGTESLVSFLTGEAVVCHVARNLAVEQLTLSAEFPVPLPVLRQTFFAVIGALLQSSGPERAALFIRDFLITQMTGKELFEMWTVVNPMGLLVEELKKRNISAPESRLTRQSGSTTALPLYFVGLYCDRKLIAEGPGETVLVAEEEAARVALRKLYGFTENRRPWDYSKPKESPKRAEQTSVAS.

A mitochondrion-targeting transit peptide spans 1 to 30 (MASAVFRLLQQGPRRLLAPAVPTLAPPVRG). An RNase III domain is found at 86–228 (DLLKTAFINS…LITQMTGKEL (143 aa)). Positions 236–306 (NPMGLLVEEL…ARVALRKLYG (71 aa)) constitute a DRBM domain. The segment covering 311-327 (RRPWDYSKPKESPKRAE) has biased composition (basic and acidic residues). The tract at residues 311–333 (RRPWDYSKPKESPKRAEQTSVAS) is disordered.

Belongs to the ribonuclease III family. Mitochondrion-specific ribosomal protein mL44 subfamily. In terms of assembly, component of the mitochondrial ribosome large subunit (39S) which comprises a 16S rRNA and about 50 distinct proteins.

It is found in the mitochondrion. Functionally, component of the 39S subunit of mitochondrial ribosome. May have a function in the assembly/stability of nascent mitochondrial polypeptides exiting the ribosome. The protein is Large ribosomal subunit protein mL44 (Mrpl44) of Mus musculus (Mouse).